Here is a 151-residue protein sequence, read N- to C-terminus: RNA polymerase-binding transcription factor DksA (151 aa).

Positions N33–E54 form a coiled coil. Positions 114, 117, 135, and 138 each coordinate Zn(2+). A dksA C4-type zinc finger spans residues C114–C138.

Belongs to the DksA family. In terms of assembly, interacts directly with the RNA polymerase.

The protein localises to the cytoplasm. Transcription factor that acts by binding directly to the RNA polymerase (RNAP). Required for negative regulation of rRNA expression and positive regulation of several amino acid biosynthesis promoters. Also required for regulation of fis expression. This Escherichia coli O157:H7 protein is RNA polymerase-binding transcription factor DksA.